The following is a 37-amino-acid chain: MQKFLTTAPVVAAIWFTLTAGILIEWNRFFPDLLFHP.

A helical transmembrane segment spans residues 4 to 24; the sequence is FLTTAPVVAAIWFTLTAGILI.

It belongs to the PsaJ family.

The protein localises to the cellular thylakoid membrane. Its function is as follows. May help in the organization of the PsaE and PsaF subunits. The chain is Photosystem I reaction center subunit IX from Synechococcus sp. (strain WH7803).